The following is a 354-amino-acid chain: NADH-quinone oxidoreductase subunit H (354 aa).

A run of 10 helical transmembrane segments spans residues 12–32 (LLGG…LIAP), 62–82 (PWGL…EIIL), 89–109 (GLFL…WVVV), 124–144 (LLFL…AGWA), 162–182 (VSYE…SGTL), 203–223 (FLSW…ISGL), 239–259 (EIVA…FFLA), 263–283 (NMIL…LPPI), 291–311 (IPGW…FLWV), and 326–346 (LGWK…GLWI).

It belongs to the complex I subunit 1 family. As to quaternary structure, NDH-1 is composed of 14 different subunits. Subunits NuoA, H, J, K, L, M, N constitute the membrane sector of the complex.

Its subcellular location is the cell inner membrane. It carries out the reaction a quinone + NADH + 5 H(+)(in) = a quinol + NAD(+) + 4 H(+)(out). In terms of biological role, NDH-1 shuttles electrons from NADH, via FMN and iron-sulfur (Fe-S) centers, to quinones in the respiratory chain. The immediate electron acceptor for the enzyme in this species is believed to be ubiquinone. Couples the redox reaction to proton translocation (for every two electrons transferred, four hydrogen ions are translocated across the cytoplasmic membrane), and thus conserves the redox energy in a proton gradient. This subunit may bind ubiquinone. This Methylibium petroleiphilum (strain ATCC BAA-1232 / LMG 22953 / PM1) protein is NADH-quinone oxidoreductase subunit H.